The chain runs to 1190 residues: Phosphatidylinositol 3,4,5-trisphosphate 5-phosphatase 1 (1190 aa).

An SH2 domain is found at 8–104 (WNHGNITRSK…GLVTHLQFPV (97 aa)). The span at 111–120 (AIDEPEEDTE) shows a compositional bias: acidic residues. Positions 111-130 (AIDEPEEDTESVMSPPELPP) are disordered. The short motif at 126 to 131 (PELPPR) is the SH3-binding 1 element. Ser-245 is modified (phosphoserine). Residues 914-917 (NPNY) carry the NPXY motif 1 motif. Residue Tyr-917 is modified to Phosphotyrosine. The residue at position 934 (Ser-934) is a Phosphoserine. Tyr-944 is modified (phosphotyrosine). The interval 946 to 1190 (QLPKDSSLGP…ESLLGRTAMQ (245 aa)) is disordered. A compositionally biased stretch (pro residues) spans 961 to 971 (PPTPPSQPPLS). Thr-963 carries the post-translational modification Phosphothreonine. 2 positions are modified to phosphoserine: Ser-966 and Ser-971. An SH3-binding 2 motif is present at residues 969–974 (PLSPKK). Residues 989-998 (QETRPGDLGK) show a composition bias toward basic and acidic residues. Positions 1014-1028 (MFENPLYGSVSPFPK) are interaction with DAB2. An NPXY motif 2 motif is present at residues 1017–1020 (NPLY). Tyr-1020 is modified (phosphotyrosine). A compositionally biased stretch (basic and acidic residues) spans 1031–1045 (PRKEQESPKMMRKEP). The SH3-binding 3 motif lies at 1038-1049 (PKMMRKEPPPCP). Over residues 1140–1149 (IPAPRPPLPV) the composition is skewed to pro residues. Residues 1161–1183 (KGRDYRDNTELPHHGKHRQEESL) are compositionally biased toward basic and acidic residues.

Belongs to the inositol 1,4,5-trisphosphate 5-phosphatase family. In terms of assembly, interacts with tyrosine phosphorylated forms of SHC1. Interacts with tyrosine phosphorylated form of DOK1. Interacts with tyrosine phosphorylated form of DOK3. Interacts with tyrosine phosphorylated form of SLAMF1/CD150. Interacts with PTPN11/SHP-2 in response to IL-3. Interacts with receptor EPOR. Interacts with receptors MS4A2/FCER1B and FCER1G. Interacts with receptors FCGR2B and FCGR3. Interacts with receptor FCGR2A, leading to regulate gene expression during the phagocytic process. Interacts with GRB2. Interacts with PLCG1. Interacts with tyrosine kinases SRC and TEC. Interacts with c-Met/MET. Interacts with MILR1 (tyrosine-phosphorylated). Can weakly interact (via NPXY motif 2) with DAB2 (via PID domain); the interaction is impaired by tyrosine phosphorylation of the NPXY motif. Interacts (via SH2 domain) with tyrosine phosphorylated KLRC1 (via ITIM). Interacts with MPL/TPOR. Post-translationally, tyrosine phosphorylated by the members of the SRC family after exposure to a diverse array of extracellular stimuli such as cytokines, growth factors, antibodies, chemokines, integrin ligands and hypertonic and oxidative stress. Phosphorylated upon IgG receptor FCGR2B-binding.

It is found in the cytoplasm. It localises to the cell membrane. The protein resides in the membrane raft. The protein localises to the cytoskeleton. It carries out the reaction a 1,2-diacyl-sn-glycero-3-phospho-(1D-myo-inositol-3,4,5-trisphosphate) + H2O = a 1,2-diacyl-sn-glycero-3-phospho-(1D-myo-inositol-3,4-bisphosphate) + phosphate. The catalysed reaction is 1D-myo-inositol 1,3,4,5-tetrakisphosphate + H2O = 1D-myo-inositol 1,3,4-trisphosphate + phosphate. The enzyme catalyses a 1,2-diacyl-sn-glycero-3-phospho-(1D-myo-inositol-4,5-bisphosphate) + H2O = a 1,2-diacyl-sn-glycero-3-phospho-(1D-myo-inositol 4-phosphate) + phosphate. Its activity is regulated as follows. Activated upon translocation to the sites of synthesis of PtdIns(3,4,5)P3 in the membrane. In terms of biological role, phosphatidylinositol (PtdIns) phosphatase that specifically hydrolyzes the 5-phosphate of phosphatidylinositol-3,4,5-trisphosphate (PtdIns(3,4,5)P3) to produce PtdIns(3,4)P2, thereby negatively regulating the PI3K (phosphoinositide 3-kinase) pathways. Also able to hydrolyze the 5-phosphate of phosphatidylinositol-4,5-bisphosphate (PtdIns(4,5)P3) and inositol 1,3,4,5-tetrakisphosphate. Acts as a negative regulator of B-cell antigen receptor signaling. Mediates signaling from the FC-gamma-RIIB receptor (FCGR2B), playing a central role in terminating signal transduction from activating immune/hematopoietic cell receptor systems. Acts as a negative regulator of myeloid cell proliferation/survival and chemotaxis, mast cell degranulation, immune cells homeostasis, integrin alpha-IIb/beta-3 signaling in platelets and JNK signaling in B-cells. Regulates proliferation of osteoclast precursors, macrophage programming, phagocytosis and activation and is required for endotoxin tolerance. Involved in the control of cell-cell junctions, CD32a signaling in neutrophils and modulation of EGF-induced phospholipase C activity. Key regulator of neutrophil migration, by governing the formation of the leading edge and polarization required for chemotaxis. Modulates FCGR3/CD16-mediated cytotoxicity in NK cells. Mediates the activin/TGF-beta-induced apoptosis through its Smad-dependent expression. The polypeptide is Phosphatidylinositol 3,4,5-trisphosphate 5-phosphatase 1 (Inpp5d) (Rattus norvegicus (Rat)).